Reading from the N-terminus, the 160-residue chain is Cyanate hydratase (160 aa).

Active-site residues include Arg100, Glu103, and Ser126.

Belongs to the cyanase family.

It carries out the reaction cyanate + hydrogencarbonate + 3 H(+) = NH4(+) + 2 CO2. Functionally, catalyzes the reaction of cyanate with bicarbonate to produce ammonia and carbon dioxide. The sequence is that of Cyanate hydratase from Arthroderma otae (strain ATCC MYA-4605 / CBS 113480) (Microsporum canis).